The sequence spans 408 residues: Peptidase T (408 aa).

Residue histidine 78 participates in Zn(2+) binding. Aspartate 80 is an active-site residue. Aspartate 140 serves as a coordination point for Zn(2+). Glutamate 173 (proton acceptor) is an active-site residue. Zn(2+)-binding residues include glutamate 174, aspartate 196, and histidine 379.

The protein belongs to the peptidase M20B family. It depends on Zn(2+) as a cofactor.

The protein resides in the cytoplasm. It catalyses the reaction Release of the N-terminal residue from a tripeptide.. In terms of biological role, cleaves the N-terminal amino acid of tripeptides. The protein is Peptidase T of Salmonella arizonae (strain ATCC BAA-731 / CDC346-86 / RSK2980).